The chain runs to 124 residues: UPF0231 protein Sputcn32_0682 (124 aa).

This sequence belongs to the UPF0231 family.

This chain is UPF0231 protein Sputcn32_0682, found in Shewanella putrefaciens (strain CN-32 / ATCC BAA-453).